We begin with the raw amino-acid sequence, 385 residues long: Cell division protein FtsZ (385 aa).

GTP contacts are provided by residues 20-24 (GGGGN), 107-109 (GTG), glutamate 138, arginine 142, and asparagine 186.

The protein belongs to the FtsZ family. As to quaternary structure, homodimer. Polymerizes to form a dynamic ring structure in a strictly GTP-dependent manner. Interacts directly with several other division proteins.

The protein localises to the cytoplasm. Functionally, essential cell division protein that forms a contractile ring structure (Z ring) at the future cell division site. The regulation of the ring assembly controls the timing and the location of cell division. One of the functions of the FtsZ ring is to recruit other cell division proteins to the septum to produce a new cell wall between the dividing cells. Binds GTP and shows GTPase activity. This is Cell division protein FtsZ from Buchnera aphidicola subsp. Baizongia pistaciae (strain Bp).